A 1134-amino-acid polypeptide reads, in one-letter code: Translation initiation factor IF-2 (1134 aa).

2 disordered regions span residues 55 to 465 and 491 to 524; these read AQKS…HIIG and LARP…QRQR. 5 stretches are compositionally biased toward polar residues: residues 56–65, 83–105, 137–147, 208–234, and 251–264; these read QKSSNSSSPP, SPPT…SSLK, PSISKNNSLKV, QIKQ…IQTN, and VQSQ…NNNL. 2 stretches are compositionally biased toward basic and acidic residues: residues 391-403 and 438-450; these read KRGD…KKDG and PDWD…EALR. 2 stretches are compositionally biased toward basic residues: residues 495–504 and 511–524; these read GKPKASKKSG and LRKR…QRQR. The tr-type G domain maps to 626–798; that stretch reads RRPPVVTVMG…ILLVTEVEDL (173 aa). The tract at residues 635–642 is G1; it reads GHVDHGKT. A GTP-binding site is contributed by 635-642; the sequence is GHVDHGKT. Residues 660 to 664 are G2; sequence GITQH. The G3 stretch occupies residues 685–688; the sequence is DTPG. Residues 685–689 and 739–742 each bind GTP; these read DTPGH and NKID. The G4 stretch occupies residues 739–742; sequence NKID. The tract at residues 775-777 is G5; that stretch reads SAI.

The protein belongs to the TRAFAC class translation factor GTPase superfamily. Classic translation factor GTPase family. IF-2 subfamily.

The protein localises to the cytoplasm. One of the essential components for the initiation of protein synthesis. Protects formylmethionyl-tRNA from spontaneous hydrolysis and promotes its binding to the 30S ribosomal subunits. Also involved in the hydrolysis of GTP during the formation of the 70S ribosomal complex. This is Translation initiation factor IF-2 from Prochlorococcus marinus (strain SARG / CCMP1375 / SS120).